A 337-amino-acid chain; its full sequence is MAKIKIGINGFGRIGRLVARVALQSDDVELVAVNDPFISTDYMTYMFKYDTVHGQWKHHEVKVKDSKTLLFGEKEVAVFGCRNPEEIPWGSVGAEYVVESTGVFTDQEKAAAHLKGGAKKVVISAPSKDAPMFVVGVNEKEYKSDINIVSNASCTTNCLAPLAKVINDKFGIVEGLMTTVHAITATQKTVDGPSSKDWRGGRAASFNIIPSSTGAAKAVGKVLPVLNGKLTGMSFRVPTVDVSVVDLTVRLEKSATYDEIKAAVKAEAEGSLKGILGYVEEDLVSTDFQGDSRSSIFDAKAGIALNGNFVKLVSWYDNEWGYSTRVVDLIRHMNSTK.

Residues 1–151 (MAKIKIGING…YKSDINIVSN (151 aa)) form a binding to NAD region. NAD(+) is bound by residues 13 to 14 (RI), D35, and R82. The interval 152–337 (ASCTTNCLAP…DLIRHMNSTK (186 aa)) is catalytic. D-glyceraldehyde 3-phosphate-binding positions include 153 to 155 (SCT), T184, 213 to 214 (TG), and R236. C154 acts as the Nucleophile in catalysis. Position 318 (N318) interacts with NAD(+).

It belongs to the glyceraldehyde-3-phosphate dehydrogenase family. In terms of assembly, homotetramer.

The protein localises to the cytoplasm. It catalyses the reaction D-glyceraldehyde 3-phosphate + phosphate + NAD(+) = (2R)-3-phospho-glyceroyl phosphate + NADH + H(+). The protein operates within carbohydrate degradation; glycolysis; pyruvate from D-glyceraldehyde 3-phosphate: step 1/5. Key enzyme in glycolysis that catalyzes the first step of the pathway by converting D-glyceraldehyde 3-phosphate (G3P) into 3-phospho-D-glyceroyl phosphate. Essential for the maintenance of cellular ATP levels and carbohydrate metabolism. In Zea mays (Maize), this protein is Glyceraldehyde-3-phosphate dehydrogenase 3, cytosolic (GAPC3).